The following is a 2554-amino-acid chain: Highly reducing polyketide synthase PKS6 (2554 aa).

The disordered stretch occupies residues 1–48 (MGSLSAVPATNGNHAALNGSASTNGQHVNGSTHVNGNHSLNGSAQVNG). Residues 8 to 48 (PATNGNHAALNGSASTNGQHVNGSTHVNGNHSLNGSAQVNG) are compositionally biased toward polar residues. One can recognise a Ketosynthase family 3 (KS3) domain in the interval 56–481 (LEPIAVVGMS…GTNAHVVVDA (426 aa)). Residues Cys-230, His-367, and His-407 each act as for beta-ketoacyl synthase activity in the active site. The segment at 595 to 913 (VFSGQGAQYP…HYTGSLKRGE (319 aa)) is malonyl-CoA:ACP transacylase (MAT) domain. An N-terminal hotdog fold region spans residues 981–1119 (HELLGTLVHD…GLVQVILKSE (139 aa)). The interval 981–1281 (HELLGTLVHD…QAWGVVATKL (301 aa)) is dehydratase (DH) domain. Residues 981-1287 (HELLGTLVHD…ATKLPDVSIG (307 aa)) form the PKS/mFAS DH domain. His-1013 functions as the Proton acceptor; for dehydratase activity in the catalytic mechanism. Positions 1137-1287 (AQHIPANQFY…ATKLPDVSIG (151 aa)) are C-terminal hotdog fold. Asp-1200 (proton donor; for dehydratase activity) is an active-site residue. The methyltransferase (CMet) domain stretch occupies residues 1451-1556 (VEVGAGTGSA…KTMLRPGGKL (106 aa)). Residues 1840-2153 (GVLDTIRWVD…AGKHTGKVIL (314 aa)) are enoyl reductase (ER) domain. Residues 2177 to 2353 (ATYLVVGGLG…TAYAVNIGAI (177 aa)) are ketoreductase (KR) domain. Residues 2457–2534 (EAQDIICDAI…ELAEIVTKGS (78 aa)) form the Carrier domain. The residue at position 2494 (Ser-2494) is an O-(pantetheine 4'-phosphoryl)serine.

It participates in secondary metabolite biosynthesis. Its function is as follows. Highly reducing polyketide synthase; part of the gene cluster that mediates the biosynthesis of the lipopeptide fusaristatin A. Fusaristatin A consists of a polyketide chain linked to three amino acid residues glutamine (Gln), dehydroalanine (dehydro-Ala), and beta-aminoisobutyric acid. The biosynthesis starts with formation of a linear polyketide chain by the highly reducing polyketide synthase PKS6. The gene cluster does not contain an acyl-CoA ligase or an acyl-transferase, and it is therefore predicted that the polyketide is transferred directly to the nonribosomal peptide synthetase NRPS7. Modules 1-3 from NRPS7 incorporate dehydro-Ala, Gln, and beta-aminoisobutyric acid in the compound, which is released by cyclization. The beta-aminoisobutyric acid units are most likely not freely available to the NRPS, but can be synthesized from thymine, which requires a dehydrogenase, a monooxygenase, and an aminotransferase. The fusaristatin A cluster contains a cytochrome P450 monooxygenase (FGSG_08207) and an aminotransferase (FGSG_17085), which theoretically can perform two of the enzymatic steps. The enzymes may however also be involved in biosynthesis of dehydroalanine or modification of the polyketide. The dehydro-Ala residue can be a result of cyclization, where serine is dehydrated. The last gene of the cluster encodes a protein with an A/B barrel domain found in variable enzymes, which hampers functional prediction. The protein is Highly reducing polyketide synthase PKS6 of Gibberella zeae (strain ATCC MYA-4620 / CBS 123657 / FGSC 9075 / NRRL 31084 / PH-1) (Wheat head blight fungus).